A 389-amino-acid chain; its full sequence is Probable dual-specificity RNA methyltransferase RlmN (389 aa).

Residues 1 to 23 are disordered; the sequence is MTTQHPDTPETGITPGGTSGAFR. Glu-127 (proton acceptor) is an active-site residue. One can recognise a Radical SAM core domain in the interval 133–376; that stretch reads YPTRTTLCIS…ATLRDTRGQD (244 aa). The cysteines at positions 140 and 381 are disulfide-linked. 3 residues coordinate [4Fe-4S] cluster: Cys-147, Cys-151, and Cys-154. S-adenosyl-L-methionine is bound by residues 202 to 203, Ser-236, 259 to 261, and Asn-338; these read GE and SLH. The active-site S-methylcysteine intermediate is Cys-381.

Belongs to the radical SAM superfamily. RlmN family. Requires [4Fe-4S] cluster as cofactor.

The protein localises to the cytoplasm. It carries out the reaction adenosine(2503) in 23S rRNA + 2 reduced [2Fe-2S]-[ferredoxin] + 2 S-adenosyl-L-methionine = 2-methyladenosine(2503) in 23S rRNA + 5'-deoxyadenosine + L-methionine + 2 oxidized [2Fe-2S]-[ferredoxin] + S-adenosyl-L-homocysteine. The enzyme catalyses adenosine(37) in tRNA + 2 reduced [2Fe-2S]-[ferredoxin] + 2 S-adenosyl-L-methionine = 2-methyladenosine(37) in tRNA + 5'-deoxyadenosine + L-methionine + 2 oxidized [2Fe-2S]-[ferredoxin] + S-adenosyl-L-homocysteine. Functionally, specifically methylates position 2 of adenine 2503 in 23S rRNA and position 2 of adenine 37 in tRNAs. This Bifidobacterium longum (strain NCC 2705) protein is Probable dual-specificity RNA methyltransferase RlmN.